A 499-amino-acid polypeptide reads, in one-letter code: Putative lipase atg15 (499 aa).

The Cytoplasmic segment spans residues 1-9 (MSIGEVSDS). The chain crosses the membrane as a helical; Signal-anchor for type II membrane protein span at residues 10–30 (AGHLASLVLPIEVAPIAPLIP). At 31-499 (EPPATAEHIF…PDSPERNEEM (469 aa)) the chain is on the lumenal side. 5 N-linked (GlcNAc...) asparagine glycosylation sites follow: Asn-170, Asn-191, Asn-192, Asn-250, and Asn-274. Ser-290 (charge relay system) is an active-site residue. The N-linked (GlcNAc...) asparagine glycan is linked to Asn-436. The disordered stretch occupies residues 436-499 (NGTETTTTSS…PDSPERNEEM (64 aa)). Positions 438 to 454 (TETTTTSSAPTTTSISR) are enriched in low complexity.

The protein belongs to the AB hydrolase superfamily. Lipase family. As to quaternary structure, binds to both phosphatidylinositol (PI) and phosphatidylinositol 3,5-bisphosphate (PIP2).

The protein localises to the endosome. It is found in the multivesicular body membrane. The protein resides in the prevacuolar compartment membrane. It catalyses the reaction a triacylglycerol + H2O = a diacylglycerol + a fatty acid + H(+). In terms of biological role, lipase which is essential for lysis of subvacuolar cytoplasm to vacuole targeted bodies and intravacuolar autophagic bodies. Involved in the lysis of intravacuolar multivesicular body (MVB) vesicles. The intravacuolar membrane disintegration by atg15 is critical to life span extension. This chain is Putative lipase atg15 (atg15), found in Chaetomium globosum (strain ATCC 6205 / CBS 148.51 / DSM 1962 / NBRC 6347 / NRRL 1970) (Soil fungus).